Reading from the N-terminus, the 182-residue chain is Adenine phosphoribosyltransferase (182 aa).

Position 133 to 137 (133 to 137 (ATGGS)) interacts with AMP.

This sequence belongs to the purine/pyrimidine phosphoribosyltransferase family. As to quaternary structure, homodimer. It depends on Mg(2+) as a cofactor.

Its subcellular location is the cytoplasm. It localises to the nucleus. The enzyme catalyses AMP + diphosphate = 5-phospho-alpha-D-ribose 1-diphosphate + adenine. It participates in purine metabolism; AMP biosynthesis via salvage pathway; AMP from adenine: step 1/1. Functionally, catalyzes a salvage reaction resulting in the formation of AMP, that is energically less costly than de novo synthesis. This chain is Adenine phosphoribosyltransferase (APT1), found in Yarrowia lipolytica (strain CLIB 122 / E 150) (Yeast).